Here is a 91-residue protein sequence, read N- to C-terminus: UPF0298 protein OB1449 (91 aa).

Belongs to the UPF0298 family.

It localises to the cytoplasm. This is UPF0298 protein OB1449 from Oceanobacillus iheyensis (strain DSM 14371 / CIP 107618 / JCM 11309 / KCTC 3954 / HTE831).